Here is a 219-residue protein sequence, read N- to C-terminus: MNKEKAIVVFSGGQDSTTCLFWAKKKYKEVIAVSFDYNQKHKLELDCAKDICKKYNIEHHILDLNLLNQLAPNSLTRQDITVDKSAPKEGVPNSFVDGRNLLFLSFVAVFAKQKGINTIITGVSQSDFSGYPDCRDVFIKSLNVTLNLAMDYEFEIITPLMWINKAETWKMAYDLGVLDIVKEETLTCYNGIKADGCGECPACKLRKKGYLEFEKYLMN.

Phe10 to Leu20 lines the ATP pocket. Zn(2+)-binding residues include Cys188, Cys197, Cys200, and Cys203.

It belongs to the QueC family. Homodimer. It depends on Zn(2+) as a cofactor.

The catalysed reaction is 7-carboxy-7-deazaguanine + NH4(+) + ATP = 7-cyano-7-deazaguanine + ADP + phosphate + H2O + H(+). The protein operates within purine metabolism; 7-cyano-7-deazaguanine biosynthesis. Its function is as follows. Catalyzes the ATP-dependent conversion of 7-carboxy-7-deazaguanine (CDG) to 7-cyano-7-deazaguanine (preQ(0)). The sequence is that of 7-cyano-7-deazaguanine synthase from Clostridium botulinum (strain Langeland / NCTC 10281 / Type F).